The sequence spans 229 residues: Potassium/proton antiporter CemA (229 aa).

Transmembrane regions (helical) follow at residues 7–27 (FTPL…SLLF), 107–127 (ILHF…SILG), and 189–209 (IISG…KYWI).

It belongs to the CemA family.

It is found in the plastid. It localises to the chloroplast inner membrane. The enzyme catalyses K(+)(in) + H(+)(out) = K(+)(out) + H(+)(in). In terms of biological role, contributes to K(+)/H(+) antiport activity by supporting proton efflux to control proton extrusion and homeostasis in chloroplasts in a light-dependent manner to modulate photosynthesis. Prevents excessive induction of non-photochemical quenching (NPQ) under continuous-light conditions. Indirectly promotes efficient inorganic carbon uptake into chloroplasts. The sequence is that of Potassium/proton antiporter CemA from Helianthus annuus (Common sunflower).